The following is a 1137-amino-acid chain: Phytochrome C (1137 aa).

Over residues Met1–Ala18 the composition is skewed to low complexity. A disordered region spans residues Met1–Val27. The 184-residue stretch at Asn217 to Val400 folds into the GAF domain. Position 322 (Cys322) interacts with phytochromobilin. PAS domains lie at Val620–Ile690 and Ile750–Ser824. The 221-residue stretch at Tyr904 to Gln1124 folds into the Histidine kinase domain.

Belongs to the phytochrome family. Homodimer. In terms of processing, contains one covalently linked phytochromobilin chromophore.

Its function is as follows. Regulatory photoreceptor which exists in two forms that are reversibly interconvertible by light: the Pr form that absorbs maximally in the red region of the spectrum and the Pfr form that absorbs maximally in the far-red region. Photoconversion of Pr to Pfr induces an array of morphogenic responses, whereas reconversion of Pfr to Pr cancels the induction of those responses. Pfr controls the expression of a number of nuclear genes including those encoding the small subunit of ribulose-bisphosphate carboxylase, chlorophyll A/B binding protein, protochlorophyllide reductase, rRNA, etc. It also controls the expression of its own gene(s) in a negative feedback fashion. The polypeptide is Phytochrome C (PHYC) (Oryza sativa subsp. indica (Rice)).